We begin with the raw amino-acid sequence, 161 residues long: Cytochrome b6-f complex subunit 4 (161 aa).

Transmembrane regions (helical) follow at residues 37–57, 96–116, and 130–150; these read LLYI…GLAV, LLGV…PFIE, and AMTV…GAAF.

This sequence belongs to the cytochrome b family. PetD subfamily. The 4 large subunits of the cytochrome b6-f complex are cytochrome b6, subunit IV (17 kDa polypeptide, PetD), cytochrome f and the Rieske protein, while the 4 small subunits are PetG, PetL, PetM and PetN. The complex functions as a dimer.

The protein localises to the cellular thylakoid membrane. Functionally, component of the cytochrome b6-f complex, which mediates electron transfer between photosystem II (PSII) and photosystem I (PSI), cyclic electron flow around PSI, and state transitions. In Synechococcus elongatus, this protein is Cytochrome b6-f complex subunit 4.